Here is a 706-residue protein sequence, read N- to C-terminus: Glycylpeptide N-tetradecanoyltransferase (706 aa).

The segment at 1–119 (MSGIAGTSQD…LASGSSREGK (119 aa)) is disordered. A compositionally biased stretch (low complexity) spans 7-42 (TSQDTSVAASASSSSTRPAAASSSIAPPSPSLTTAP). The segment covering 47-65 (EQDDDDDQENDDEEEEEEG) has biased composition (acidic residues). The span at 78 to 95 (KQRKKKKSKAAAKLRKKL) shows a compositional bias: basic residues. Tetradecanoyl-CoA contacts are provided by residues 180 to 183 (HKFW), 317 to 319 (LCV), and 325 to 329 (SKRLA). The active-site Proton acceptor; via carboxylate is the Val706.

This sequence belongs to the NMT family. As to quaternary structure, monomer.

The protein localises to the cytoplasm. It catalyses the reaction N-terminal glycyl-[protein] + tetradecanoyl-CoA = N-tetradecanoylglycyl-[protein] + CoA + H(+). Adds a myristoyl group to the N-terminal glycine residue of certain cellular proteins. This is Glycylpeptide N-tetradecanoyltransferase (NMT1) from Mycosarcoma maydis (Corn smut fungus).